Here is a 191-residue protein sequence, read N- to C-terminus: UPF0302 protein SA1295 (191 aa).

The protein belongs to the UPF0302 family.

This is UPF0302 protein SA1295 from Staphylococcus aureus (strain N315).